A 113-amino-acid polypeptide reads, in one-letter code: Iron-sulfur cluster assembly protein CyaY (113 aa).

It belongs to the frataxin family.

In terms of biological role, involved in iron-sulfur (Fe-S) cluster assembly. May act as a regulator of Fe-S biogenesis. In Ralstonia nicotianae (strain ATCC BAA-1114 / GMI1000) (Ralstonia solanacearum), this protein is Iron-sulfur cluster assembly protein CyaY.